The primary structure comprises 197 residues: V-type ATP synthase subunit E 2 (197 aa).

Belongs to the V-ATPase E subunit family.

In terms of biological role, produces ATP from ADP in the presence of a proton gradient across the membrane. This Clostridium tetani (strain Massachusetts / E88) protein is V-type ATP synthase subunit E 2.